A 2696-amino-acid chain; its full sequence is MDQTCELPRRNCLLPFSNPVNLDAPEDKDSPFGNGQSNFSEPLNGCTMQLSTVSGTSQNAYGQDSPSCYIPLRRLQDLASMINVEYLNGSADGSESFQDPEKSDSRAQTPIVCTSLSPGGPTALAMKQEPSCNNSPELQVKVTKTIKNGFLHFENFTCVDDADVDSEMDPEQPVTEDESIEEIFEETQTNATCNYETKSENGVKVAMGSEQDSTPESRHGAVKSPFLPLAPQTETQKNKQRNEVDGSNEKAALLPAPFSLGDTNITIEEQLNSINLSFQDDPDSSTSTLGNMLELPGTSSSSTSQELPFCQPKKKSTPLKYEVGDLIWAKFKRRPWWPCRICSDPLINTHSKMKVSNRRPYRQYYVEAFGDPSERAWVAGKAIVMFEGRHQFEELPVLRRRGKQKEKGYRHKVPQKILSKWEASVGLAEQYDVPKGSKNRKCIPGSIKLDSEEDMPFEDCTNDPESEHDLLLNGCLKSLAFDSEHSADEKEKPCAKSRARKSSDNPKRTSVKKGHIQFEAHKDERRGKIPENLGLNFISGDISDTQASNELSRIANSLTGSNTAPGSFLFSSCGKNTAKKEFETSNGDSLLGLPEGALISKCSREKNKPQRSLVCGSKVKLCYIGAGDEEKRSDSISICTTSDDGSSDLDPIEHSSESDNSVLEIPDAFDRTENMLSMQKNEKIKYSRFAATNTRVKAKQKPLISNSHTDHLMGCTKSAEPGTETSQVNLSDLKASTLVHKPQSDFTNDALSPKFNLSSSISSENSLIKGGAANQALLHSKSKQPKFRSIKCKHKENPVMAEPPVINEECSLKCCSSDTKGSPLASISKSGKVDGLKLLNNMHEKTRDSSDIETAVVKHVLSELKELSYRSLGEDVSDSGTSKPSKPLLFSSASSQNHIPIEPDYKFSTLLMMLKDMHDSKTKEQRLMTAQNLVSYRSPGRGDCSTNSPVGVSKVLVSGGSTHNSEKKGDGTQNSANPSPSGGDSALSGELSASLPGLLSDKRDLPASGKSRSDCVTRRNCGRSKPSSKLRDAFSAQMVKNTVNRKALKTERKRKLNQLPSVTLDAVLQGDRERGGSLRGGAEDPSKEDPLQIMGHLTSEDGDHFSDVHFDSKVKQSDPGKISEKGLSFENGKGPELDSVMNSENDELNGVNQVVPKKRWQRLNQRRTKPRKRMNRFKEKENSECAFRVLLPSDPVQEGRDEFPEHRTPSASILEEPLTEQNHADCLDSAGPRLNVCDKSSASIGDMEKEPGIPSLTPQAELPEPAVRSEKKRLRKPSKWLLEYTEEYDQIFAPKKKQKKVQEQVHKVSSRCEEESLLARGRSSAQNKQVDENSLISTKEEPPVLEREAPFLEGPLAQSELGGGHAELPQLTLSVPVAPEVSPRPALESEELLVKTPGNYESKRQRKPTKKLLESNDLDPGFMPKKGDLGLSKKCYEAGHLENGITESCATSYSKDFGGGTTKIFDKPRKRKRQRHAAAKMQCKKVKNDDSSKEIPGSEGELMPHRTATSPKETVEEGVEHDPGMPASKKMQGERGGGAALKENVCQNCEKLGELLLCEAQCCGAFHLECLGLTEMPRGKFICNECRTGIHTCFVCKQSGEDVKRCLLPLCGKFYHEECVQKYPPTVMQNKGFRCSLHICITCHAANPANVSASKGRLMRCVRCPVAYHANDFCLAAGSKILASNSIICPNHFTPRRGCRNHEHVNVSWCFVCSEGGSLLCCDSCPAAFHRECLNIDIPEGNWYCNDCKAGKKPHYREIVWVKVGRYRWWPAEICHPRAVPSNIDKMRHDVGEFPVLFFGSNDYLWTHQARVFPYMEGDVSSKDKMGKGVDGTYKKALQEAAARFEELKAQKELRQLQEDRKNDKKPPPYKHIKVNRPIGRVQIFTADLSEIPRCNCKATDENPCGIDSECINRMLLYECHPTVCPAGGRCQNQCFSKRQYPEVEIFRTLQRGWGLRTKTDIKKGEFVNEYVGELIDEEECRARIRYAQEHDITNFYMLTLDKDRIIDAGPKGNYARFMNHCCQPNCETQKWSVNGDTRVGLFALSDIKAGTELTFNYNLECLGNGKTVCKCGAPNCSGFLGVRPKNQPIATEEKSKKFKKKQQGKRRTQGEITKEREDECFSCGDAGQLVSCKKPGCPKVYHADCLNLTKRPAGKWECPWHQCDICGKEAASFCEMCPSSFCKQHREGMLFISKLDGRLSCTEHDPCGPNPLEPGEIREYVPPPVPLPPGPSTHLAEQSTGMAAQAPKMSDKPPADTNQMLSLSKKALAGTCQRPLLPERPLERTDSRPQPLDKVRDLAGSGTKSQSLVSSQRPLDRPPAVAGPRPQLSDKPSPVTSPSSSPSVRSQPLERPLGTADPRLDKSIGAASPRPQSLEKTSVPTGLRLPPPDRLLITSSPKPQTSDRPTDKPHASLSQRLPPPEKVLSAVVQTLVAKEKALRPVDQNTQSKNRAALVMDLIDLTPRQKERAASPHQVTPQADEKMPVLESSSWPASKGLGHMPRAVEKGCVSDPLQTSGKAAAPSEDPWQAVKSLTQARLLSQPPAKAFLYEPTTQASGRASAGAEQTPGPLSQSPGLVKQAKQMVGGQQLPALAAKSGQSFRSLGKAPASLPTEEKKLVTTEQSPWALGKASSRAGLWPIVAGQTLAQSCWSAGSTQTLAQTCWSLGRGQDPKPEQNTLPALNQAPSSHKCAESEQK.

Ser-117 is subject to Phosphoserine. Disordered stretches follow at residues 207–252 (MGSE…EKAA) and 281–311 (DPDS…PFCQ). Positions 236–248 (QKNKQRNEVDGSN) are enriched in basic and acidic residues. Polar residues-rich tracts occupy residues 281–290 (DPDSSTSTLG) and 297–306 (GTSSSSTSQE). Residues 323 to 388 (VGDLIWAKFK…AGKAIVMFEG (66 aa)) enclose the PWWP 1 domain. Ser-483 and Ser-486 each carry phosphoserine. The interval 487 to 514 (ADEKEKPCAKSRARKSSDNPKRTSVKKG) is disordered. Ser-766 carries the phosphoserine modification. A disordered region spans residues 872-891 (LGEDVSDSGTSKPSKPLLFS). Lys-906 participates in a covalent cross-link: Glycyl lysine isopeptide (Lys-Gly) (interchain with G-Cter in SUMO2). Disordered stretches follow at residues 936–1035 (YRSP…DAFS), 1067–1093 (VLQG…PLQI), 1112–1134 (SKVK…NGKG), 1243–1272 (SIGD…SEKK), 1294–1344 (PKKK…EPPV), 1382–1428 (SPRP…KKGD), and 1480–1534 (KMQC…MQGE). A compositionally biased stretch (low complexity) spans 948–961 (SPVGVSKVLVSGGS). Residues 971–982 (GTQNSANPSPSG) show a composition bias toward polar residues. 3 stretches are compositionally biased toward basic and acidic residues: residues 1000–1017 (SDKR…DCVT), 1070–1090 (GDRE…KEDP), and 1112–1124 (SKVK…KISE). Basic and acidic residues predominate over residues 1300-1314 (KVQEQVHKVSSRCEE). Over residues 1323–1337 (SSAQNKQVDENSLIS) the composition is skewed to polar residues. Lys-1339 is covalently cross-linked (Glycyl lysine isopeptide (Lys-Gly) (interchain with G-Cter in SUMO2)). Ser-1510 bears the Phosphoserine mark. Residues 1513 to 1523 (ETVEEGVEHDP) show a composition bias toward basic and acidic residues. PHD-type zinc fingers lie at residues 1543 to 1589 (ENVC…CRTG), 1590 to 1646 (IHTC…CHAA), and 1707 to 1751 (VSWC…CKAG). In terms of domain architecture, PWWP 2 spans 1756 to 1818 (YREIVWVKVG…QARVFPYMEG (63 aa)). The AWS domain occupies 1890 to 1940 (SEIPRCNCKATDENPCGIDSECINRMLLYECHPTVCPAGGRCQNQCFSKRQ). Positions 1942-2059 (PEVEIFRTLQ…AGTELTFNYN (118 aa)) constitute an SET domain. S-adenosyl-L-methionine contacts are provided by residues 1952–1954 (RGW), 1994–1997 (TNFY), 2020–2021 (NH), Asn-2065, and Lys-2071. An inhibits enzyme activity in the absence of bound histone region spans residues 2060–2066 (LECLGNG). A Post-SET domain is found at 2066–2082 (GKTVCKCGAPNCSGFLG). The tract at residues 2091–2111 (ATEEKSKKFKKKQQGKRRTQG) is disordered. Positions 2097 to 2108 (KKFKKKQQGKRR) are enriched in basic residues. The segment at 2118-2165 (EDECFSCGDAGQLVSCKKPGCPKVYHADCLNLTKRPAGKWECPWHQCD) adopts a PHD-type 4; atypical zinc-finger fold. Residues 2213 to 2422 (LEPGEIREYV…SLSQRLPPPE (210 aa)) are disordered. Residues 2222–2232 (VPPPVPLPPGP) show a composition bias toward pro residues. The span at 2281–2298 (RPLERTDSRPQPLDKVRD) shows a compositional bias: basic and acidic residues. Residues 2303–2314 (GTKSQSLVSSQR) show a composition bias toward polar residues. The segment covering 2330–2348 (SDKPSPVTSPSSSPSVRSQ) has biased composition (low complexity). Ser-2369 is modified (phosphoserine). Polar residues-rich tracts occupy residues 2371-2381 (RPQSLEKTSVP) and 2394-2404 (ITSSPKPQTSD). Thr-2462 is modified (phosphothreonine). Disordered stretches follow at residues 2464–2499 (RQKE…GLGH), 2553–2575 (TQAS…QSPG), 2595–2616 (KSGQ…EEKK), and 2665–2696 (LGRG…SEQK). Ser-2471 carries the phosphoserine modification. Residue Lys-2616 forms a Glycyl lysine isopeptide (Lys-Gly) (interchain with G-Cter in SUMO2) linkage. Polar residues predominate over residues 2674-2686 (EQNTLPALNQAPS).

This sequence belongs to the class V-like SAM-binding methyltransferase superfamily. As to quaternary structure, interacts with the ligand-binding domains of RARA and THRA in the absence of ligand; in the presence of ligand the interaction is severely disrupted but some binding still occurs. Interacts with the ligand-binding domains of RXRA and ESRRA only in the presence of ligand. Interacts with ZNF496. Interacts with AR DNA- and ligand-binding domains. In terms of tissue distribution, expressed in the fetal/adult brain, kidney, skeletal muscle, spleen, and the thymus, and faintly in the lung.

Its subcellular location is the nucleus. The protein localises to the chromosome. The enzyme catalyses L-lysyl(36)-[histone H3] + 2 S-adenosyl-L-methionine = N(6),N(6)-dimethyl-L-lysyl(36)-[histone H3] + 2 S-adenosyl-L-homocysteine + 2 H(+). In terms of biological role, histone methyltransferase that dimethylates Lys-36 of histone H3 (H3K36me2). Transcriptional intermediary factor capable of both negatively or positively influencing transcription, depending on the cellular context. The chain is Histone-lysine N-methyltransferase, H3 lysine-36 specific (NSD1) from Homo sapiens (Human).